The following is a 479-amino-acid chain: Ribosomal RNA small subunit methyltransferase F (479 aa).

S-adenosyl-L-methionine is bound by residues 125–131 (AAAPGSK), E149, D176, and D194. Residue C247 is the Nucleophile of the active site.

This sequence belongs to the class I-like SAM-binding methyltransferase superfamily. RsmB/NOP family.

Its subcellular location is the cytoplasm. The catalysed reaction is cytidine(1407) in 16S rRNA + S-adenosyl-L-methionine = 5-methylcytidine(1407) in 16S rRNA + S-adenosyl-L-homocysteine + H(+). Specifically methylates the cytosine at position 1407 (m5C1407) of 16S rRNA. The polypeptide is Ribosomal RNA small subunit methyltransferase F (Shigella dysenteriae serotype 1 (strain Sd197)).